The sequence spans 334 residues: Holliday junction branch migration complex subunit RuvB (334 aa).

Residues 1-181 (MTRILDNDLM…FGITGHMEYY (181 aa)) are large ATPase domain (RuvB-L). ATP contacts are provided by residues Leu20, Arg21, Gly62, Lys65, Thr66, Thr67, 128–130 (EDF), Arg171, Tyr181, and Arg218. Thr66 contributes to the Mg(2+) binding site. Residues 182-252 (QVDDLTEIVE…MTDKALEMLD (71 aa)) form a small ATPAse domain (RuvB-S) region. The tract at residues 255 to 334 (HEGLDYVDQK…LKYPLDTKTE (80 aa)) is head domain (RuvB-H). Arg291, Arg310, Arg312, and Arg315 together coordinate DNA.

The protein belongs to the RuvB family. In terms of assembly, homohexamer. Forms an RuvA(8)-RuvB(12)-Holliday junction (HJ) complex. HJ DNA is sandwiched between 2 RuvA tetramers; dsDNA enters through RuvA and exits via RuvB. An RuvB hexamer assembles on each DNA strand where it exits the tetramer. Each RuvB hexamer is contacted by two RuvA subunits (via domain III) on 2 adjacent RuvB subunits; this complex drives branch migration. In the full resolvosome a probable DNA-RuvA(4)-RuvB(12)-RuvC(2) complex forms which resolves the HJ.

The protein localises to the cytoplasm. It catalyses the reaction ATP + H2O = ADP + phosphate + H(+). The RuvA-RuvB-RuvC complex processes Holliday junction (HJ) DNA during genetic recombination and DNA repair, while the RuvA-RuvB complex plays an important role in the rescue of blocked DNA replication forks via replication fork reversal (RFR). RuvA specifically binds to HJ cruciform DNA, conferring on it an open structure. The RuvB hexamer acts as an ATP-dependent pump, pulling dsDNA into and through the RuvAB complex. RuvB forms 2 homohexamers on either side of HJ DNA bound by 1 or 2 RuvA tetramers; 4 subunits per hexamer contact DNA at a time. Coordinated motions by a converter formed by DNA-disengaged RuvB subunits stimulates ATP hydrolysis and nucleotide exchange. Immobilization of the converter enables RuvB to convert the ATP-contained energy into a lever motion, pulling 2 nucleotides of DNA out of the RuvA tetramer per ATP hydrolyzed, thus driving DNA branch migration. The RuvB motors rotate together with the DNA substrate, which together with the progressing nucleotide cycle form the mechanistic basis for DNA recombination by continuous HJ branch migration. Branch migration allows RuvC to scan DNA until it finds its consensus sequence, where it cleaves and resolves cruciform DNA. This is Holliday junction branch migration complex subunit RuvB from Streptococcus uberis (strain ATCC BAA-854 / 0140J).